The primary structure comprises 287 residues: ATP synthase gamma chain (287 aa).

It belongs to the ATPase gamma chain family. In terms of assembly, F-type ATPases have 2 components, CF(1) - the catalytic core - and CF(0) - the membrane proton channel. CF(1) has five subunits: alpha(3), beta(3), gamma(1), delta(1), epsilon(1). CF(0) has three main subunits: a, b and c.

It is found in the cell inner membrane. Its function is as follows. Produces ATP from ADP in the presence of a proton gradient across the membrane. The gamma chain is believed to be important in regulating ATPase activity and the flow of protons through the CF(0) complex. The protein is ATP synthase gamma chain of Salmonella gallinarum (strain 287/91 / NCTC 13346).